The chain runs to 266 residues: Glutamate racemase (266 aa).

Substrate-binding positions include 9 to 10 (DS) and 41 to 42 (YG). C72 functions as the Proton donor/acceptor in the catalytic mechanism. 73–74 (NT) serves as a coordination point for substrate. The Proton donor/acceptor role is filled by C184. 185–186 (TH) serves as a coordination point for substrate.

This sequence belongs to the aspartate/glutamate racemases family.

The catalysed reaction is L-glutamate = D-glutamate. Its pathway is cell wall biogenesis; peptidoglycan biosynthesis. In terms of biological role, provides the (R)-glutamate required for cell wall biosynthesis. In Staphylococcus haemolyticus (strain JCSC1435), this protein is Glutamate racemase.